Consider the following 149-residue polypeptide: SsrA-binding protein (149 aa).

This sequence belongs to the SmpB family.

The protein localises to the cytoplasm. Its function is as follows. Required for rescue of stalled ribosomes mediated by trans-translation. Binds to transfer-messenger RNA (tmRNA), required for stable association of tmRNA with ribosomes. tmRNA and SmpB together mimic tRNA shape, replacing the anticodon stem-loop with SmpB. tmRNA is encoded by the ssrA gene; the 2 termini fold to resemble tRNA(Ala) and it encodes a 'tag peptide', a short internal open reading frame. During trans-translation Ala-aminoacylated tmRNA acts like a tRNA, entering the A-site of stalled ribosomes, displacing the stalled mRNA. The ribosome then switches to translate the ORF on the tmRNA; the nascent peptide is terminated with the 'tag peptide' encoded by the tmRNA and targeted for degradation. The ribosome is freed to recommence translation, which seems to be the essential function of trans-translation. This is SsrA-binding protein from Acholeplasma laidlawii (strain PG-8A).